Here is a 331-residue protein sequence, read N- to C-terminus: Zinc finger CW-type PWWP domain protein 2 homolog (331 aa).

The CW-type zinc finger occupies 9-64 (EFVHRTWVQCENESCLKWRLLSPAAAAAVNPSEPWYCFMNTDPSYSSCSVSEEDFP). Positions 18, 23, 45, and 56 each coordinate Zn(2+). Residues 83–147 (LGSLVLVKLR…AAFVGHFSLT (65 aa)) enclose the PWWP domain. Residues 264–295 (IQEPTAREDESQGEQLSQCSPESPTGSPFQSY) are disordered. Residues 276–293 (GEQLSQCSPESPTGSPFQ) show a composition bias toward polar residues.

Its function is as follows. Histone methylation reader which binds to non-methylated (H3K4me0), monomethylated (H3K4me1), dimethylated (H3K4me2) and trimethylated (H3K4me3) 'Lys-4' on histone H3. The order of binding preference is H3K4me3 &gt; H3K4me2 &gt; H3K4me1 &gt; H3K4me0. The sequence is that of Zinc finger CW-type PWWP domain protein 2 homolog (Zcwpw2) from Mus musculus (Mouse).